The chain runs to 738 residues: RNA polymerase II degradation factor 1 (738 aa).

The 43-residue stretch at 21–63 (ALKSKIDTLTELFPDWTSDDLIDIVQEYDDLETIIDKITSGAV) folds into the CUE domain. Positions 69–84 (VKKPAKKEKYEKKEQQ) are enriched in basic and acidic residues. Disordered stretches follow at residues 69–455 (VKKP…QQQQ), 467–503 (YLSQ…QGNN), and 640–688 (NGQE…QPVN). Low complexity predominate over residues 103–121 (KSSNNSNSFTSTKHNSSNN). The span at 211–220 (HNNKEEHKQI) shows a compositional bias: basic and acidic residues. Low complexity predominate over residues 224–237 (SLSSKKTTSRTSAS). Residues 256 to 291 (KKTESPLENVAELKKEISDIKKDDQKSEASEEKVNE) show a composition bias toward basic and acidic residues. Residues Ser-260, Ser-273, and Ser-307 each carry the phosphoserine modification. Composition is skewed to acidic residues over residues 298-328 (EQEE…EAEE) and 337-358 (QTAE…EVTV). Thr-338 bears the Phosphothreonine mark. Low complexity-rich tracts occupy residues 380 to 455 (VPQP…QQQQ) and 467 to 498 (YLSQ…PQSQ). The interval 500–530 (QGNNVAAQQYYMYQNQFPGYSYPGMFDSQGY) is contains the proteolytic activation cleavage site. Ser-646 is subject to Phosphoserine. Residues 660-688 (QKQSQQQQQQQPQGQPQPEVQMQNGQPVN) show a composition bias toward low complexity.

The protein belongs to the DEF1 family. In terms of assembly, homodimer; may form higher order oligomers. Interacts with the large RNA polymerase II subunit RPO21; the interaction is direct and serves to bridge RPO21 to the Elongin complex in a manner dependent on transcription stress. Interacts with RAD26. In terms of processing, ubiquitinated. Post-translationally, proteolytically cleaved by the proteasome in response to transcription stress; the resulting N-terminal form constitutes the activated nuclear form and the C-terminal portion is degraded.

The protein localises to the cytoplasm. Its subcellular location is the nucleus. It localises to the chromosome. The protein resides in the telomere. Recruits the ubiquitination machinery to RNA polymerase II for polyubiquitination, removal and degradation, when the transcription-coupled repair (TCR) factor RAD26 fails to efficiently displace stalled RNA polymerase II. Also involved in telomere length regulation. Binds DNA. In Saccharomyces cerevisiae (strain JAY291) (Baker's yeast), this protein is RNA polymerase II degradation factor 1 (DEF1).